The following is a 194-amino-acid chain: dITP/XTP pyrophosphatase (194 aa).

8–13 provides a ligand contact to substrate; it reads TSNPGK. E38 and D67 together coordinate Mg(2+). The active-site Proton acceptor is the D67. Substrate is bound by residues S68, 152–155, K175, and 180–181; these read FGYD and HR.

The protein belongs to the HAM1 NTPase family. Homodimer. Requires Mg(2+) as cofactor.

It catalyses the reaction XTP + H2O = XMP + diphosphate + H(+). It carries out the reaction dITP + H2O = dIMP + diphosphate + H(+). The catalysed reaction is ITP + H2O = IMP + diphosphate + H(+). Pyrophosphatase that catalyzes the hydrolysis of nucleoside triphosphates to their monophosphate derivatives, with a high preference for the non-canonical purine nucleotides XTP (xanthosine triphosphate), dITP (deoxyinosine triphosphate) and ITP. Seems to function as a house-cleaning enzyme that removes non-canonical purine nucleotides from the nucleotide pool, thus preventing their incorporation into DNA/RNA and avoiding chromosomal lesions. The chain is dITP/XTP pyrophosphatase from Legionella pneumophila (strain Paris).